Reading from the N-terminus, the 469-residue chain is MRINFVLLITLILPWFVSGDSSEEAVDAPLDVKDDTGNKDYYKDSTGAYHFDKLIVTPLEYRDGESWKQSVIYCDLIFAKENKEEKGSFVKAQLKEDAEHPFIYRLLKLQTPLETYRGFIDGKNTEILDEIKSINLFEDFLSESLVPEISPSVNIPIDETALYCFIGIQETEPIRIPWPVLTVEFYGDAPPPESYFRTIKSTLLAISMFLGFITLTWLLRCIKSQSGVQPAQISLAFWVFIFVFTHSYQVYSMVAIGRGSFSTWYVVSFLFSLVFEEGLEQSAYTSFLLVLCFGLGITKPALVKYYVYLAFVAFVQGLFVTFAPLSYPVMSFYGVRGILLKLIWNIYTFVYYGLPFFAVYRLYKQAGESRKLGFEAKYSLLRTCYIALAAVTVSNCLFLGVVRPLLGSQLSLGFQLITSCITFVDFLVFAFLFDCSKFVFLKYQPIPFEWYALESMESLNLEPAPDRKV.

The first 19 residues, 1–19 (MRINFVLLITLILPWFVSG), serve as a signal peptide directing secretion. A run of 7 helical transmembrane segments spans residues 199–219 (IKST…TWLL), 236–256 (AFWV…MVAI), 283–303 (AYTS…PALV), 305–325 (YYVY…FAPL), 338–358 (ILLK…PFFA), 386–406 (IALA…RPLL), and 413–433 (GFQL…AFLF).

The protein resides in the membrane. This is an uncharacterized protein from Schizosaccharomyces pombe (strain 972 / ATCC 24843) (Fission yeast).